A 358-amino-acid chain; its full sequence is MFEAVEELVAEHADLEKKLADPSVHSDQANARKLNKRYAELTPIVATFRSWKQTGDDMETAREFAADDPDFAAEVKELDKQRDELTEKLRLLLVPRDPSDDKDVILEIKAGAGGDESALFAGDLLRMYLRYAERIGWKTEIIDSTESELGGYKDVQVAVKTKGGQGATEPGQGVWARLKYEGGVHRVQRVPATESQGRIHTSAAGVLVTPEAEEIDVEINPNDLRIDVYRSSGPGGQSVNTTDSAVRITHIPTGVVASCQNEKSQLQNKEQAMRILRSRLLAAAQEEAEKEAADARRSQVRTVDRSEKIRTYNFPENRISDHRVGFKAYNLDQVLDGDLDSVIQACVDADSAAKLAAA.

Glutamine 237 carries the post-translational modification N5-methylglutamine.

The protein belongs to the prokaryotic/mitochondrial release factor family. Post-translationally, methylated by PrmC. Methylation increases the termination efficiency of RF1.

The protein localises to the cytoplasm. Its function is as follows. Peptide chain release factor 1 directs the termination of translation in response to the peptide chain termination codons UAG and UAA. This Streptomyces coelicolor (strain ATCC BAA-471 / A3(2) / M145) protein is Peptide chain release factor 1.